We begin with the raw amino-acid sequence, 347 residues long: NADH-ubiquinone oxidoreductase chain 2 (347 aa).

A run of 11 helical transmembrane segments spans residues 1 to 21 (MNPL…SIIL), 25 to 45 (HWFM…PVLM), 59 to 79 (YFLT…INLM), 96 to 116 (LLIT…FWVP), 122 to 142 (VSLQ…LAVM), 145 to 165 (IFAS…IMIG), 178 to 198 (IMAY…IYNP), 200 to 220 (LMLL…MMFM), 242 to 262 (VLMM…GFMP), 274 to 294 (NSVI…FFYM), and 325 to 345 (LLAP…MFIL).

Belongs to the complex I subunit 2 family. As to quaternary structure, core subunit of respiratory chain NADH dehydrogenase (Complex I) which is composed of 45 different subunits. Interacts with TMEM242.

It is found in the mitochondrion inner membrane. It carries out the reaction a ubiquinone + NADH + 5 H(+)(in) = a ubiquinol + NAD(+) + 4 H(+)(out). Functionally, core subunit of the mitochondrial membrane respiratory chain NADH dehydrogenase (Complex I) which catalyzes electron transfer from NADH through the respiratory chain, using ubiquinone as an electron acceptor. Essential for the catalytic activity and assembly of complex I. This Myosorex kihaulei (Kihaule's mouse shrew) protein is NADH-ubiquinone oxidoreductase chain 2.